Consider the following 375-residue polypeptide: Trans-enoyl reductase cghC (375 aa).

48–51 provides a ligand contact to NADP(+); the sequence is VDTK. 135–142 contacts substrate; the sequence is NAWYTSGW. NADP(+) is bound by residues 188-191, 211-214, and 276-277; these read SSST, SARN, and LD. 297 to 301 is a binding site for substrate; it reads GPELV. 366–367 serves as a coordination point for NADP(+); sequence VS.

It belongs to the zinc-containing alcohol dehydrogenase family. As to quaternary structure, monomer.

The catalysed reaction is (2S,4S)-4-hydroxy-4-methylglutamate + 8 malonyl-CoA + 3 S-adenosyl-L-methionine + ATP + 8 NADPH + 11 H(+) = (2S)-3-[(2S)-3,5-dioxo-4-[(2E,4R,6R,8E,10E,12E)-4,6,12-trimethyltetradeca-2,8,10,12-tetraenoyl]pyrrolidin-2-yl]-2-hydroxy-2-methylpropanoate + AMP + 3 S-adenosyl-L-homocysteine + 8 CO2 + diphosphate + 8 NADP(+) + 8 CoA + 6 H2O. It functions in the pathway secondary metabolite biosynthesis. In terms of biological role, trans-enoyl reductase; part of the gene cluster that mediates the biosynthesis of the tetramic acid Sch210972, a potential anti-HIV fungal natural product that contains a decalin core. The PKS module of cghG together with the enoylreductase cghC catalyze the formation of the polyketide unit which is then conjugated to 4-hydroxyl-4-methyl glutamate (HMG) by the condensation domain of the cghG NRPS module. One unique structural feature of Sch210972 is the tetramic acid motif proposed to be derived from the non-proteinogenic amino acid HMG, by a Dieckmann-type condensation catalyzed by the reductase domain of cghG. The aldolase cghB catalyzes the aldol condensation of 2 molecules of pyruvic acid to yield the intermediate 4-hydroxyl-4-methyl-2-oxoglutarate (HMOG), which can then be stereoselectively transaminated by an unidentified enzyme to form HMG. The Diels-Alderase cghA then uses the Dieckmann product released by cghG as substrate and catalyzes the Diels-Alder cycloaddition to form the decalin ring of Sch210972. CghA also suppresses the nonenzymatic formation of the alternative stereoisomer. The polypeptide is Trans-enoyl reductase cghC (Chaetomium globosum (strain ATCC 6205 / CBS 148.51 / DSM 1962 / NBRC 6347 / NRRL 1970) (Soil fungus)).